A 500-amino-acid polypeptide reads, in one-letter code: Glycerol kinase (500 aa).

Thr-13 is a binding site for ADP. Residues Thr-13, Thr-14, and Ser-15 each coordinate ATP. Thr-13 is a sn-glycerol 3-phosphate binding site. Residue Arg-17 participates in ADP binding. The sn-glycerol 3-phosphate site is built by Arg-83, Glu-84, Tyr-135, and Asp-244. The glycerol site is built by Arg-83, Glu-84, Tyr-135, Asp-244, and Gln-245. Residues Thr-266 and Gly-309 each coordinate ADP. Residues Thr-266, Gly-309, Gln-313, and Gly-410 each coordinate ATP. ADP is bound by residues Gly-410 and Asn-414.

It belongs to the FGGY kinase family.

It carries out the reaction glycerol + ATP = sn-glycerol 3-phosphate + ADP + H(+). Its pathway is polyol metabolism; glycerol degradation via glycerol kinase pathway; sn-glycerol 3-phosphate from glycerol: step 1/1. Inhibited by fructose 1,6-bisphosphate (FBP). Functionally, key enzyme in the regulation of glycerol uptake and metabolism. Catalyzes the phosphorylation of glycerol to yield sn-glycerol 3-phosphate. The polypeptide is Glycerol kinase (Burkholderia ambifaria (strain ATCC BAA-244 / DSM 16087 / CCUG 44356 / LMG 19182 / AMMD) (Burkholderia cepacia (strain AMMD))).